We begin with the raw amino-acid sequence, 812 residues long: 5-methyltetrahydropteroyltriglutamate--homocysteine methyltransferase 3, chloroplastic (812 aa).

A chloroplast-targeting transit peptide spans 1 to 33 (MGQLALQRLQPLASLPRRPPSLPPPSSATPSLP). The segment at 13 to 33 (ASLPRRPPSLPPPSSATPSLP) is disordered. Positions 17 to 27 (RRPPSLPPPSS) are enriched in pro residues. 5-methyltetrahydropteroyltri-L-glutamate-binding residues include lysine 66 and asparagine 164. The tract at residues 430–456 (MRQASRRSSPRVTNAAVQQDVDAVKKS) is disordered. L-homocysteine is bound by residues 485–487 (IGS) and glutamate 538. L-methionine contacts are provided by residues 485-487 (IGS) and glutamate 538. Residues aspartate 543, tyrosine 566, 569 to 570 (RC), and tryptophan 615 each bind 5-methyltetrahydropteroyltri-L-glutamate. Residue aspartate 653 participates in L-homocysteine binding. Aspartate 653 is a binding site for L-methionine. Zn(2+) is bound by residues histidine 695, cysteine 697, histidine 706, aspartate 710, and glutamate 719. Histidine 749 serves as the catalytic Proton donor. Cysteine 781 provides a ligand contact to Zn(2+).

The protein belongs to the vitamin-B12 independent methionine synthase family. It depends on Zn(2+) as a cofactor. As to expression, expressed in seeds.

It is found in the plastid. The protein localises to the chloroplast. The catalysed reaction is 5-methyltetrahydropteroyltri-L-glutamate + L-homocysteine = tetrahydropteroyltri-L-glutamate + L-methionine. It participates in amino-acid biosynthesis; L-methionine biosynthesis via de novo pathway; L-methionine from L-homocysteine (MetE route): step 1/1. Functionally, catalyzes the transfer of a methyl group from 5-methyltetrahydrofolate to homocysteine resulting in methionine formation. This Arabidopsis thaliana (Mouse-ear cress) protein is 5-methyltetrahydropteroyltriglutamate--homocysteine methyltransferase 3, chloroplastic (MS3).